The following is a 468-amino-acid chain: MSNGKITQVIGPVIDVEFEAGELPEIYYALKVSNPSLGDEPWNLVAEVAQHLGENTVRAIAMDSTDGLVRGQEVLNTGRQISVPVGRGTLGRILNVIGEPVDEQGPVETDTTWEIHRPTPEFVDQSTKVEAFETGIKVVDLLAPYARGGKIGLFGGAGVGKTVLIMELIHNIAKKHGGFSVFAGVGERTREGNDLWNEMKESNVLDKTALVYGQMNEPPGARARVALSALTVAEYFRDQENQDVLLFVDNIFRFTQAGSEVSALLGRIPSAVGYQPTLSTEMGELQERITTTKNGSITSVQAIYVPADDLTDPAPATTFAHLDATTVLSRQIAELGIYPAVDPLDSSSRILDPQVLGEEHYQVARDVQYVLQRYKDLQDIIAILGMDELSEEDKQTVSRARKIQRFLSQPFHVAEIFTGTPGKYVELSETIRGFKEIVEGKHDSVPEQAFYMAGGIDEVLENAAKMAS.

155–162 (GGAGVGKT) is a binding site for ATP.

Belongs to the ATPase alpha/beta chains family. F-type ATPases have 2 components, CF(1) - the catalytic core - and CF(0) - the membrane proton channel. CF(1) has five subunits: alpha(3), beta(3), gamma(1), delta(1), epsilon(1). CF(0) has three main subunits: a(1), b(2) and c(9-12). The alpha and beta chains form an alternating ring which encloses part of the gamma chain. CF(1) is attached to CF(0) by a central stalk formed by the gamma and epsilon chains, while a peripheral stalk is formed by the delta and b chains.

Its subcellular location is the cell inner membrane. It carries out the reaction ATP + H2O + 4 H(+)(in) = ADP + phosphate + 5 H(+)(out). Produces ATP from ADP in the presence of a proton gradient across the membrane. The catalytic sites are hosted primarily by the beta subunits. This chain is ATP synthase subunit beta 1, found in Syntrophotalea carbinolica (strain DSM 2380 / NBRC 103641 / GraBd1) (Pelobacter carbinolicus).